Here is a 137-residue protein sequence, read N- to C-terminus: Nucleoside diphosphate kinase (137 aa).

ATP contacts are provided by Lys-9, Phe-57, Arg-85, Thr-91, Arg-102, and Asn-112. The active-site Pros-phosphohistidine intermediate is the His-115.

This sequence belongs to the NDK family. Homotetramer. It depends on Mg(2+) as a cofactor.

Its subcellular location is the cytoplasm. It carries out the reaction a 2'-deoxyribonucleoside 5'-diphosphate + ATP = a 2'-deoxyribonucleoside 5'-triphosphate + ADP. The catalysed reaction is a ribonucleoside 5'-diphosphate + ATP = a ribonucleoside 5'-triphosphate + ADP. Major role in the synthesis of nucleoside triphosphates other than ATP. The ATP gamma phosphate is transferred to the NDP beta phosphate via a ping-pong mechanism, using a phosphorylated active-site intermediate. The protein is Nucleoside diphosphate kinase of Thermus thermophilus (strain ATCC 27634 / DSM 579 / HB8).